The sequence spans 322 residues: Ferredoxin--NADP reductase (322 aa).

Aspartate 34, glutamine 42, tyrosine 47, valine 87, phenylalanine 120, aspartate 279, and threonine 320 together coordinate FAD.

Belongs to the ferredoxin--NADP reductase type 2 family. As to quaternary structure, homodimer. It depends on FAD as a cofactor.

It catalyses the reaction 2 reduced [2Fe-2S]-[ferredoxin] + NADP(+) + H(+) = 2 oxidized [2Fe-2S]-[ferredoxin] + NADPH. The chain is Ferredoxin--NADP reductase from Streptococcus pneumoniae (strain Hungary19A-6).